The chain runs to 1038 residues: DNA polymerase delta catalytic subunit (1038 aa).

The interval 1–29 (MSHSIPITSSPPPALKKLKLPNGSEEPSE) is disordered. Residues Cys-942, Cys-945, Cys-958, and Cys-961 each contribute to the Zn(2+) site. The segment at 942-961 (CVSCRTPLKKDNLGALCPNC) adopts a CysA-type zinc-finger fold. [4Fe-4S] cluster-binding residues include Cys-992, Cys-995, Cys-1005, and Cys-1010. The short motif at 992-1010 (CQRCQGSLHQEVLCSNKDC) is the CysB motif element.

The protein belongs to the DNA polymerase type-B family. In terms of assembly, heterodimer with subunits of 125 kDa and 50 kDa. The 125 kDa subunit contains the polymerase active site and most likely the active site for the 3'-5' exonuclease activity. It depends on [4Fe-4S] cluster as a cofactor.

It is found in the nucleus. The enzyme catalyses DNA(n) + a 2'-deoxyribonucleoside 5'-triphosphate = DNA(n+1) + diphosphate. Functionally, this polymerase possesses two enzymatic activities: DNA synthesis (polymerase) and an exonucleolytic activity that degrades single-stranded DNA in the 3'- to 5'-direction. The chain is DNA polymerase delta catalytic subunit (POL3) from Candida albicans (Yeast).